The following is a 289-amino-acid chain: Porin (289 aa).

As to quaternary structure, homotrimer.

The protein localises to the cell outer membrane. Forms channels that allow the passive diffusion of small hydrophilic solutes up to an exclusion limit of about 0.6 kDa. This chain is Porin (opmA), found in Fuscovulum blasticum (Rhodobacter blasticus).